A 338-amino-acid chain; its full sequence is Phenylalanine--tRNA ligase alpha subunit (338 aa).

Glu-253 provides a ligand contact to Mg(2+).

It belongs to the class-II aminoacyl-tRNA synthetase family. Phe-tRNA synthetase alpha subunit type 1 subfamily. In terms of assembly, tetramer of two alpha and two beta subunits. Requires Mg(2+) as cofactor.

The protein localises to the cytoplasm. The enzyme catalyses tRNA(Phe) + L-phenylalanine + ATP = L-phenylalanyl-tRNA(Phe) + AMP + diphosphate + H(+). The protein is Phenylalanine--tRNA ligase alpha subunit of Syntrophus aciditrophicus (strain SB).